The following is a 482-amino-acid chain: QWRF motif-containing protein 3 (482 aa).

Residues 1-20 show a composition bias toward basic and acidic residues; the sequence is MKSCEHELLKTRRGKSREVS. 2 disordered regions span residues 1-60 and 171-220; these read MKSC…GLKK and TAKP…QWAL. Positions 21 to 42 are enriched in low complexity; that stretch reads SRFLSSPSASSSPNRRNSTSNS. Polar residues predominate over residues 191–219; sequence RTNSSKGIENRLQRNNSVSRYGSSMSQWA. The QWRF motif signature appears at 292–295; it reads QWRF.

Belongs to the QWRF family.

In Arabidopsis thaliana (Mouse-ear cress), this protein is QWRF motif-containing protein 3 (QWRF3).